The primary structure comprises 134 residues: Small ribosomal subunit protein uS8c (134 aa).

Belongs to the universal ribosomal protein uS8 family. In terms of assembly, part of the 30S ribosomal subunit.

The protein localises to the plastid. Its subcellular location is the chloroplast. Its function is as follows. One of the primary rRNA binding proteins, it binds directly to 16S rRNA central domain where it helps coordinate assembly of the platform of the 30S subunit. The protein is Small ribosomal subunit protein uS8c (rps8) of Daucus carota (Wild carrot).